Consider the following 422-residue polypeptide: L-cysteine:1D-myo-inositol 2-amino-2-deoxy-alpha-D-glucopyranoside ligase (422 aa).

C43 provides a ligand contact to Zn(2+). L-cysteinyl-5'-AMP contacts are provided by residues 43–46, T58, and 81–83; these read CGIT and NVT. The short motif at 45–55 is the 'HIGH' region element; that stretch reads ITPYDATHLGH. The segment covering 185–200 has biased composition (basic and acidic residues); the sequence is AERGGDPDRPGKRNRL. The disordered stretch occupies residues 185–221; sequence AERGGDPDRPGKRNRLDPMLWRGRRPGEPSWPGPRGV. The 'ERGGDP' region motif lies at 186–191; sequence ERGGDP. W227 is an L-cysteinyl-5'-AMP binding site. C231 contributes to the Zn(2+) binding site. Residue 249 to 251 coordinates L-cysteinyl-5'-AMP; the sequence is GSD. H256 is a Zn(2+) binding site. I288 contacts L-cysteinyl-5'-AMP. The 'KMSKS' region motif lies at 294–298; sequence KMSKS.

Belongs to the class-I aminoacyl-tRNA synthetase family. MshC subfamily. In terms of assembly, monomer. The cofactor is Zn(2+).

The catalysed reaction is 1D-myo-inositol 2-amino-2-deoxy-alpha-D-glucopyranoside + L-cysteine + ATP = 1D-myo-inositol 2-(L-cysteinylamino)-2-deoxy-alpha-D-glucopyranoside + AMP + diphosphate + H(+). Catalyzes the ATP-dependent condensation of GlcN-Ins and L-cysteine to form L-Cys-GlcN-Ins. This is L-cysteine:1D-myo-inositol 2-amino-2-deoxy-alpha-D-glucopyranoside ligase from Geodermatophilus obscurus (strain ATCC 25078 / DSM 43160 / JCM 3152 / CCUG 61914 / KCC A-0152 / KCTC 9177 / NBRC 13315 / NRRL B-3577 / G-20).